A 331-amino-acid polypeptide reads, in one-letter code: Cytosolic arginine sensor for mTORC1 subunit 1 (331 aa).

Position 14 is a phosphoserine (Ser-14). 2 ACT domains span residues 72 to 137 (AEAT…HTLA) and 259 to 320 (GELW…DILQ). L-arginine is bound by residues 110 to 111 (SV), Gly-273, 279 to 280 (IV), and 299 to 303 (TFNFD).

It belongs to the GATS family. Forms homodimers and heterodimers with CASTOR2. Interacts with the GATOR2 complex which is composed of MIOS, SEC13, SEH1L, WDR24 and WDR59; the interaction is negatively regulated by arginine. Interacts with TM4SF5; the interaction is positively regulated by leucine and is negatively regulated by arginine. Phosphorylation at Ser-14 by AKT1, promoting the interaction between CASTOR1 and RNF167. Post-translationally, ubiquitinated by RNF167 via 'Lys-29'-polyubiquitination, leading to its degradation, releasing the GATOR2 complex. Ubiquitination by RNF167 is promoted by phosphorylation at Ser-14 by AKT1.

The protein localises to the cytoplasm. The protein resides in the cytosol. In terms of biological role, functions as an intracellular arginine sensor within the amino acid-sensing branch of the TORC1 signaling pathway. As a homodimer or a heterodimer with CASTOR2, binds and inhibits the GATOR subcomplex GATOR2 and thereby mTORC1. Binding of arginine to CASTOR1 allosterically disrupts the interaction of CASTOR1-containing dimers with GATOR2 which can in turn activate mTORC1 and the TORC1 signaling pathway. The polypeptide is Cytosolic arginine sensor for mTORC1 subunit 1 (Mus musculus (Mouse)).